The sequence spans 311 residues: tRNA-cytidine(32) 2-sulfurtransferase (311 aa).

The PP-loop motif signature appears at 47–52 (SGGKDS). [4Fe-4S] cluster contacts are provided by cysteine 122, cysteine 125, and cysteine 213.

The protein belongs to the TtcA family. As to quaternary structure, homodimer. It depends on Mg(2+) as a cofactor. The cofactor is [4Fe-4S] cluster.

It localises to the cytoplasm. It catalyses the reaction cytidine(32) in tRNA + S-sulfanyl-L-cysteinyl-[cysteine desulfurase] + AH2 + ATP = 2-thiocytidine(32) in tRNA + L-cysteinyl-[cysteine desulfurase] + A + AMP + diphosphate + H(+). It functions in the pathway tRNA modification. Functionally, catalyzes the ATP-dependent 2-thiolation of cytidine in position 32 of tRNA, to form 2-thiocytidine (s(2)C32). The sulfur atoms are provided by the cysteine/cysteine desulfurase (IscS) system. The polypeptide is tRNA-cytidine(32) 2-sulfurtransferase (Salmonella dublin (strain CT_02021853)).